A 168-amino-acid polypeptide reads, in one-letter code: Endoribonuclease YbeY (168 aa).

Residues His126, His130, and His136 each contribute to the Zn(2+) site.

It belongs to the endoribonuclease YbeY family. Zn(2+) is required as a cofactor.

The protein resides in the cytoplasm. Its function is as follows. Single strand-specific metallo-endoribonuclease involved in late-stage 70S ribosome quality control and in maturation of the 3' terminus of the 16S rRNA. The sequence is that of Endoribonuclease YbeY from Sinorhizobium medicae (strain WSM419) (Ensifer medicae).